Consider the following 254-residue polypeptide: Geranylgeranylglyceryl phosphate synthase (254 aa).

2 residues coordinate Mg(2+): Asp-28 and Ser-57. Sn-glycerol 1-phosphate-binding positions include Tyr-176–Gly-182, Gly-207–Gly-208, and Gly-229–Thr-230.

It belongs to the GGGP/HepGP synthase family. Group II subfamily. Mg(2+) is required as a cofactor.

It localises to the cytoplasm. The catalysed reaction is sn-glycerol 1-phosphate + (2E,6E,10E)-geranylgeranyl diphosphate = sn-3-O-(geranylgeranyl)glycerol 1-phosphate + diphosphate. It participates in membrane lipid metabolism; glycerophospholipid metabolism. In terms of biological role, prenyltransferase that catalyzes the transfer of the geranylgeranyl moiety of geranylgeranyl diphosphate (GGPP) to the C3 hydroxyl of sn-glycerol-1-phosphate (G1P). This reaction is the first ether-bond-formation step in the biosynthesis of archaeal membrane lipids. The chain is Geranylgeranylglyceryl phosphate synthase from Pyrococcus horikoshii (strain ATCC 700860 / DSM 12428 / JCM 9974 / NBRC 100139 / OT-3).